The following is a 245-amino-acid chain: 14-3-3 protein theta (245 aa).

The protein belongs to the 14-3-3 family. Homodimer, and heterodimer with other family members.

The protein resides in the cytoplasm. Its function is as follows. Adapter protein implicated in the regulation of a large spectrum of both general and specialized signaling pathways. Binds to a large number of partners, usually by recognition of a phosphoserine or phosphothreonine motif. Binding generally results in the modulation of the activity of the binding partner. In Gallus gallus (Chicken), this protein is 14-3-3 protein theta (YWHAQ).